The primary structure comprises 441 residues: DNA primase DnaG (441 aa).

Residues 165–241 (DTIIIVEGRA…DIDYVARAPP (77 aa)) form the Toprim domain. Mg(2+) contacts are provided by glutamate 171, aspartate 215, and aspartate 217. Over residues 299 to 315 (KEEVAERGEEMESKAEG) the composition is skewed to basic and acidic residues. Positions 299–320 (KEEVAERGEEMESKAEGAEQPT) are disordered.

It belongs to the archaeal DnaG primase family. As to quaternary structure, forms a ternary complex with MCM helicase and DNA. Component of the archaeal exosome complex. The cofactor is Mg(2+).

The catalysed reaction is ssDNA + n NTP = ssDNA/pppN(pN)n-1 hybrid + (n-1) diphosphate.. In terms of biological role, RNA polymerase that catalyzes the synthesis of short RNA molecules used as primers for DNA polymerase during DNA replication. Also part of the exosome, which is a complex involved in RNA degradation. Acts as a poly(A)-binding protein that enhances the interaction between heteromeric, adenine-rich transcripts and the exosome. This Ignicoccus hospitalis (strain KIN4/I / DSM 18386 / JCM 14125) protein is DNA primase DnaG.